The chain runs to 529 residues: uncharacterized protein (529 aa).

Positions 1-20 (MYFLILILVLLLIMVAAATA) are cleaved as a signal peptide.

This is an uncharacterized protein from Orgyia pseudotsugata multicapsid polyhedrosis virus (OpMNPV).